The sequence spans 469 residues: tRNA(Ile)-lysidine synthase (469 aa).

26 to 31 (SGGPDS) is a binding site for ATP.

It belongs to the tRNA(Ile)-lysidine synthase family.

It is found in the cytoplasm. The catalysed reaction is cytidine(34) in tRNA(Ile2) + L-lysine + ATP = lysidine(34) in tRNA(Ile2) + AMP + diphosphate + H(+). Its function is as follows. Ligates lysine onto the cytidine present at position 34 of the AUA codon-specific tRNA(Ile) that contains the anticodon CAU, in an ATP-dependent manner. Cytidine is converted to lysidine, thus changing the amino acid specificity of the tRNA from methionine to isoleucine. This chain is tRNA(Ile)-lysidine synthase, found in Clostridium perfringens (strain ATCC 13124 / DSM 756 / JCM 1290 / NCIMB 6125 / NCTC 8237 / Type A).